We begin with the raw amino-acid sequence, 176 residues long: Ubiquinol-cytochrome c reductase iron-sulfur subunit (176 aa).

A helical membrane pass occupies residues 15-36 (FLFVATGAAAAVGGAAALWPFI). In terms of domain architecture, Rieske spans 87–174 (ARAVNVASLP…YQFVSDTKIQ (88 aa)). [2Fe-2S] cluster is bound by residues Cys119, His121, Cys138, and His141. A disulfide bridge links Cys124 with Cys140.

The protein belongs to the Rieske iron-sulfur protein family. In terms of assembly, the main subunits of complex b-c1 are: cytochrome b, cytochrome c1 and the Rieske protein. [2Fe-2S] cluster serves as cofactor.

It is found in the cell membrane. It catalyses the reaction a quinol + 2 Fe(III)-[cytochrome c](out) = a quinone + 2 Fe(II)-[cytochrome c](out) + 2 H(+)(out). Its function is as follows. Component of the ubiquinol-cytochrome c reductase complex (complex III or cytochrome b-c1 complex), which is a respiratory chain that generates an electrochemical potential coupled to ATP synthesis. The protein is Ubiquinol-cytochrome c reductase iron-sulfur subunit (petA) of Bradyrhizobium diazoefficiens (strain JCM 10833 / BCRC 13528 / IAM 13628 / NBRC 14792 / USDA 110).